The primary structure comprises 376 residues: Mitogen-activated protein kinase 4 (376 aa).

A Protein kinase domain is found at 43 to 329; sequence VPPLRPIGRG…VDEALCHPYL (287 aa). Residues 49-57 and K72 each bind ATP; that span reads IGRGAYGIV. Residue D169 is the Proton acceptor of the active site. Residue T201 is modified to Phosphothreonine. A TXY motif is present at residues 201–203; that stretch reads TEY. The residue at position 203 (Y203) is a Phosphotyrosine.

Belongs to the protein kinase superfamily. CMGC Ser/Thr protein kinase family. MAP kinase subfamily. In terms of assembly, interacts with MEKK1, MKK1, MKK2 and MKK6. May form a ternary complex composed of MEKK1 and MKK1/MKK2 and MPK4. Interacts with MKS1 and AP2C1. May form a ternary or larger complex with MKS1 and WRKY25 and/or WRKY33. Interacts with MAP65-1. No interactions with RACK1A, RACK1B or RACK1C. Interacts directly with ASR3 and mediates its phosphorylation. Binds to MEKK2. Interacts with PAT1. Binds to HT1. In terms of processing, dually phosphorylated on Thr-201 and Tyr-203, which activates the enzyme. Autophosphorylated on serine and tyrosine residues. Dephosphorylated by DSPTP1. Phosphorylated by MKK6 in vitro. Ubiquitous. Expressed in the veins and stomatal guard cells of leaf plates, petioles, stem, roots and flowers.

It is found in the cytoplasm. The protein resides in the nucleus. Its subcellular location is the cytoskeleton. The enzyme catalyses L-seryl-[protein] + ATP = O-phospho-L-seryl-[protein] + ADP + H(+). It carries out the reaction L-threonyl-[protein] + ATP = O-phospho-L-threonyl-[protein] + ADP + H(+). Activated by threonine and tyrosine phosphorylation. Activated by the MAP kinase kinases MKK1 and MKK2. Activated in response to touch, wounding, low temperature, low humidity, salt stress and the bacterial elicitors flagellin and harpin. Activated upon Pseudomonas syringae pv. tomato DC3000 infection. Repressed by the protein phosphatase 2C AP2C1. Repressed by DSPTP1-mediated dephosphorylation. Activated by the MAP kinase kinase MKK6 in vitro. The ANPs-MKK6-MPK4 module is involved in the regulation of plant cytokinesis during meiosis and mitosis. Essential to promote the progression of cytokinesis and for cellularization (formation of the cell plate) during male-specific meiosis. Involved in cortical microtubules organization and stabilization by regulating the phosphorylation state of microtubule-associated proteins such as MAP65-1. Involved in root hair development process. Negative regulator of systemic acquired resistance (SAR) and salicylic acid- (SA) mediated defense response. Required for jasmonic acid- (JA) mediated defense gene expression. May regulate activity of transcription factor controlling pathogenesis-related (PR) gene expression. Seems to act independently of the SAR regulatory protein NPR1 (Nonexpresser of PR1). Phosphorylates MKS1 and transcription factors WRKY25 and WRKY33. The MEKK1, MKK1/MKK2 and MPK4 function in a signaling pathway that modulates the expression of genes responding to biotic and abiotic stresses and also plays an important role in pathogen defense by negatively regulating innate immunity. Phosphorylates MEKK2 upon treatment with flg22. Involved in stomatal movement regulation by repressing HT1 and HT1-mediated GHR1 phosphorylation. The polypeptide is Mitogen-activated protein kinase 4 (Arabidopsis thaliana (Mouse-ear cress)).